We begin with the raw amino-acid sequence, 210 residues long: Outer-membrane lipoprotein carrier protein (210 aa).

Positions 1–26 are cleaved as a signal peptide; it reads MHMIRRAAGALAVFAVAALAAAPAWA.

Belongs to the LolA family. As to quaternary structure, monomer.

The protein localises to the periplasm. Functionally, participates in the translocation of lipoproteins from the inner membrane to the outer membrane. Only forms a complex with a lipoprotein if the residue after the N-terminal Cys is not an aspartate (The Asp acts as a targeting signal to indicate that the lipoprotein should stay in the inner membrane). This Bordetella bronchiseptica (strain ATCC BAA-588 / NCTC 13252 / RB50) (Alcaligenes bronchisepticus) protein is Outer-membrane lipoprotein carrier protein.